The sequence spans 864 residues: Leucine--tRNA ligase (864 aa).

The 'HIGH' region motif lies at 42–52 (PYPSGKLHMGH). Positions 624 to 628 (KMSKS) match the 'KMSKS' region motif. Position 627 (K627) interacts with ATP.

Belongs to the class-I aminoacyl-tRNA synthetase family.

It is found in the cytoplasm. It carries out the reaction tRNA(Leu) + L-leucine + ATP = L-leucyl-tRNA(Leu) + AMP + diphosphate. The protein is Leucine--tRNA ligase of Burkholderia lata (strain ATCC 17760 / DSM 23089 / LMG 22485 / NCIMB 9086 / R18194 / 383).